A 38-amino-acid chain; its full sequence is Photosystem II reaction center protein X 1 (38 aa).

The helical transmembrane segment at 8–28 (FLWSLLYGAVVLGLLFGAIVF) threads the bilayer.

It belongs to the PsbX family. Type 1 subfamily. In terms of assembly, PSII is composed of 1 copy each of membrane proteins PsbA, PsbB, PsbC, PsbD, PsbE, PsbF, PsbH, PsbI, PsbJ, PsbK, PsbL, PsbM, PsbT, PsbX, PsbY, PsbZ, Psb30/Ycf12, peripheral proteins PsbO, CyanoQ (PsbQ), PsbU, PsbV and a large number of cofactors. It forms dimeric complexes.

It localises to the cellular thylakoid membrane. Its function is as follows. Involved in the binding and/or turnover of quinones at the Q(B) site of photosystem II (PSII). PSII is a light-driven water plastoquinone oxidoreductase, using light energy to abstract electrons from H(2)O, generating a proton gradient subsequently used for ATP formation. The chain is Photosystem II reaction center protein X 1 from Synechococcus sp. (strain JA-3-3Ab) (Cyanobacteria bacterium Yellowstone A-Prime).